Reading from the N-terminus, the 729-residue chain is Polyphosphate kinase (729 aa).

The interval 1-46 (MTEAQTRTEPSESSESSEAVAPAITSAADSAPEAPPATTAPAIENP) is disordered. Residues 25-42 (TSAADSAPEAPPATTAPA) are compositionally biased toward low complexity. ATP is bound at residue asparagine 90. Positions 422 and 452 each coordinate Mg(2+). The Phosphohistidine intermediate role is filled by histidine 482. Residues tyrosine 515, arginine 611, and histidine 639 each contribute to the ATP site.

The protein belongs to the polyphosphate kinase 1 (PPK1) family. Mg(2+) serves as cofactor. Post-translationally, an intermediate of this reaction is the autophosphorylated ppk in which a phosphate is covalently linked to a histidine residue through a N-P bond.

The catalysed reaction is [phosphate](n) + ATP = [phosphate](n+1) + ADP. Catalyzes the reversible transfer of the terminal phosphate of ATP to form a long-chain polyphosphate (polyP). The chain is Polyphosphate kinase from Mycolicibacterium gilvum (strain PYR-GCK) (Mycobacterium gilvum (strain PYR-GCK)).